The primary structure comprises 93 residues: UPF0250 protein PSPA7_1111 (93 aa).

The protein belongs to the UPF0250 family.

The sequence is that of UPF0250 protein PSPA7_1111 from Pseudomonas paraeruginosa (strain DSM 24068 / PA7) (Pseudomonas aeruginosa (strain PA7)).